The chain runs to 145 residues: Nicking endonuclease (145 aa).

The segment at 126-145 (NPQEKTQVKTETKSGFARFL) is disordered.

Its function is as follows. Endonuclease responsible for the single-chain interruptions (nicks) located at specific positions in the minus strand of the viral genome. In Escherichia phage T5 (Enterobacteria phage T5), this protein is Nicking endonuclease.